The following is a 462-amino-acid chain: uncharacterized protein (462 aa).

The next 2 membrane-spanning stretches (helical) occupy residues 12–32 and 257–277; these read WWWLTFGCARTVTVGFVAPTV and GLCVDLLVCVLLLALLLLELV.

This sequence belongs to the HHV-5 US29 protein family.

It localises to the host membrane. This is an uncharacterized protein from Human cytomegalovirus (strain AD169) (HHV-5).